The chain runs to 465 residues: Ribulose bisphosphate carboxylase large chain (465 aa).

Lys-4 carries the post-translational modification N6,N6,N6-trimethyllysine. Substrate contacts are provided by Asn-113 and Thr-163. Catalysis depends on Lys-165, which acts as the Proton acceptor. A substrate-binding site is contributed by Lys-167. The Mg(2+) site is built by Lys-191, Asp-193, and Glu-194. Lys-191 carries the post-translational modification N6-carboxylysine. His-284 serves as the catalytic Proton acceptor. Residues Arg-285, His-317, and Ser-369 each coordinate substrate.

This sequence belongs to the RuBisCO large chain family. Type I subfamily. In terms of assembly, heterohexadecamer of 8 large chains and 8 small chains; disulfide-linked. The disulfide link is formed within the large subunit homodimers. Mg(2+) serves as cofactor. Post-translationally, the disulfide bond which can form in the large chain dimeric partners within the hexadecamer appears to be associated with oxidative stress and protein turnover.

Its subcellular location is the plastid. The protein resides in the chloroplast. It carries out the reaction 2 (2R)-3-phosphoglycerate + 2 H(+) = D-ribulose 1,5-bisphosphate + CO2 + H2O. The catalysed reaction is D-ribulose 1,5-bisphosphate + O2 = 2-phosphoglycolate + (2R)-3-phosphoglycerate + 2 H(+). Its function is as follows. RuBisCO catalyzes two reactions: the carboxylation of D-ribulose 1,5-bisphosphate, the primary event in carbon dioxide fixation, as well as the oxidative fragmentation of the pentose substrate in the photorespiration process. Both reactions occur simultaneously and in competition at the same active site. This chain is Ribulose bisphosphate carboxylase large chain, found in Casuarina equisetifolia (Beach she-oak).